A 428-amino-acid polypeptide reads, in one-letter code: Cholecystokinin receptor type A (428 aa).

Over 1-41 (MEVADSLLGNGSDVPPPCELGLENETLVCLEQPRAAKEWQP) the chain is Extracellular. N-linked (GlcNAc...) asparagine glycans are attached at residues N10 and N24. C18 and C29 are oxidised to a cystine. A helical transmembrane segment spans residues 42 to 67 (AVQILLYSLIFLLSVLGNTLVITVLI). Over 68 to 77 (RNKRMRTVTN) the chain is Cytoplasmic. The chain crosses the membrane as a helical span at residues 78 to 104 (IFLLSLAVSDLMLCLFCMPFNLIPNLL). Residues 105 to 115 (KDFIFGSAVCK) lie on the Extracellular side of the membrane. A disulfide bond links C114 and C196. Residues 116-137 (TTTYFMGTSVSVSTFNLVAISL) traverse the membrane as a helical segment. The Cytoplasmic portion of the chain corresponds to 138-157 (ERYGAICKPLQSRVWQTKSH). The chain crosses the membrane as a helical span at residues 158 to 178 (ALKVIATTWCLSFTIMTPYPI). Residues 179-210 (YSNLVPFTKTNNQTANMCRFLLPNDVMQQSWH) lie on the Extracellular side of the membrane. A glycan (N-linked (GlcNAc...) asparagine) is linked at N190. A helical transmembrane segment spans residues 211 to 234 (TFLLLILFLIPGIVMMVAYGLISL). Over 235-313 (ELYQGIKFDA…NLMAKKRVIR (79 aa)) the chain is Cytoplasmic. The tract at residues 250–269 (ARDRNPSTGSSGRYEDGDGC) is disordered. The helical transmembrane segment at 314 to 334 (MLMVIVVLFFLCWMPIFSANA) threads the bilayer. Over 335–349 (WRAYDTASAERRLSG) the chain is Extracellular. Residues 350–373 (TPISFILLLSYTSSCVNPIIYCFM) form a helical membrane-spanning segment. Residues 374 to 428 (NKRFRLGFLATFPCCPHPGPPGPRGEVGEEEEGRTTGASLSRYSYSHMSASAPGP) lie on the Cytoplasmic side of the membrane. The S-palmitoyl cysteine moiety is linked to residue C387. The disordered stretch occupies residues 393–428 (PPGPRGEVGEEEEGRTTGASLSRYSYSHMSASAPGP). Residues 409 to 422 (TGASLSRYSYSHMS) are compositionally biased toward polar residues.

It belongs to the G-protein coupled receptor 1 family.

It localises to the cell membrane. Its function is as follows. Receptor for cholecystokinin. Mediates pancreatic growth and enzyme secretion, smooth muscle contraction of the gall bladder and stomach. Has a 1000-fold higher affinity for CCK rather than for gastrin. It modulates feeding and dopamine-induced behavior in the central and peripheral nervous system. This receptor mediates its action by association with G proteins that activate a phosphatidylinositol-calcium second messenger system. The protein is Cholecystokinin receptor type A (CCKAR) of Canis lupus familiaris (Dog).